The primary structure comprises 239 residues: Purine nucleoside phosphorylase DeoD-type (239 aa).

His-5 provides a ligand contact to a purine D-ribonucleoside. Residues Gly-21, Arg-25, Arg-44, and 88–91 (RVGS) each bind phosphate. Residues 180-182 (EME) and 204-205 (SD) contribute to the a purine D-ribonucleoside site. Residue Asp-205 is the Proton donor of the active site.

Belongs to the PNP/UDP phosphorylase family. In terms of assembly, homohexamer; trimer of homodimers.

It catalyses the reaction a purine D-ribonucleoside + phosphate = a purine nucleobase + alpha-D-ribose 1-phosphate. The enzyme catalyses a purine 2'-deoxy-D-ribonucleoside + phosphate = a purine nucleobase + 2-deoxy-alpha-D-ribose 1-phosphate. Functionally, catalyzes the reversible phosphorolytic breakdown of the N-glycosidic bond in the beta-(deoxy)ribonucleoside molecules, with the formation of the corresponding free purine bases and pentose-1-phosphate. This chain is Purine nucleoside phosphorylase DeoD-type, found in Salmonella choleraesuis (strain SC-B67).